Consider the following 556-residue polypeptide: Zinc finger protein 18 (556 aa).

The SCAN box domain occupies 41–123; that stretch reads RQLFRQFRYQ…TLVESLKGDP (83 aa). Residues 169–195 are disordered; it reads QDLPLQNTSSAPGELLSHGVKEESDLE. The KRAB domain maps to 218–291; sequence EVGTALLPSL…HLHSAEKMAR (74 aa). 5 C2H2-type zinc fingers span residues 415-437, 443-465, 471-493, 499-521, and 527-549; these read PTCR…QRTH, FHCR…QRTH, CKCD…EKIH, YKCP…QRVH, and YKCT…QRSH.

Belongs to the krueppel C2H2-type zinc-finger protein family.

It localises to the nucleus. Its function is as follows. May be involved in transcriptional regulation. This Rattus norvegicus (Rat) protein is Zinc finger protein 18 (Znf18).